The primary structure comprises 311 residues: Bifunctional protein FolD (311 aa).

NADP(+) contacts are provided by residues 184–186 (GAS), Ile209, and Ile250.

The protein belongs to the tetrahydrofolate dehydrogenase/cyclohydrolase family. Homodimer.

It carries out the reaction (6R)-5,10-methylene-5,6,7,8-tetrahydrofolate + NADP(+) = (6R)-5,10-methenyltetrahydrofolate + NADPH. It catalyses the reaction (6R)-5,10-methenyltetrahydrofolate + H2O = (6R)-10-formyltetrahydrofolate + H(+). Its pathway is one-carbon metabolism; tetrahydrofolate interconversion. In terms of biological role, catalyzes the oxidation of 5,10-methylenetetrahydrofolate to 5,10-methenyltetrahydrofolate and then the hydrolysis of 5,10-methenyltetrahydrofolate to 10-formyltetrahydrofolate. The polypeptide is Bifunctional protein FolD (Gluconacetobacter diazotrophicus (strain ATCC 49037 / DSM 5601 / CCUG 37298 / CIP 103539 / LMG 7603 / PAl5)).